A 197-amino-acid chain; its full sequence is Imidazoleglycerol-phosphate dehydratase (197 aa).

It belongs to the imidazoleglycerol-phosphate dehydratase family.

Its subcellular location is the cytoplasm. The enzyme catalyses D-erythro-1-(imidazol-4-yl)glycerol 3-phosphate = 3-(imidazol-4-yl)-2-oxopropyl phosphate + H2O. Its pathway is amino-acid biosynthesis; L-histidine biosynthesis; L-histidine from 5-phospho-alpha-D-ribose 1-diphosphate: step 6/9. The chain is Imidazoleglycerol-phosphate dehydratase from Thermobifida fusca (strain YX).